The chain runs to 313 residues: Thiamine thiazole synthase (313 aa).

Substrate contacts are provided by residues A71, 92–93 (EA), G100, and V165. C199 bears the 2,3-didehydroalanine (Cys) mark. Substrate-binding positions include D201, H216, M268, and 278–280 (RMG).

The protein belongs to the THI4 family. As to quaternary structure, homooctamer. Fe cation serves as cofactor. During the catalytic reaction, a sulfide is transferred from Cys-199 to a reaction intermediate, generating a dehydroalanine residue.

It is found in the cytoplasm. It localises to the nucleus. The catalysed reaction is [ADP-thiazole synthase]-L-cysteine + glycine + NAD(+) = [ADP-thiazole synthase]-dehydroalanine + ADP-5-ethyl-4-methylthiazole-2-carboxylate + nicotinamide + 3 H2O + 2 H(+). Functionally, involved in biosynthesis of the thiamine precursor thiazole. Catalyzes the conversion of NAD and glycine to adenosine diphosphate 5-(2-hydroxyethyl)-4-methylthiazole-2-carboxylic acid (ADT), an adenylated thiazole intermediate. The reaction includes an iron-dependent sulfide transfer from a conserved cysteine residue of the protein to a thiazole intermediate. The enzyme can only undergo a single turnover, which suggests it is a suicide enzyme. May have additional roles in adaptation to various stress conditions and in DNA damage tolerance. The sequence is that of Thiamine thiazole synthase from Coprinopsis cinerea (strain Okayama-7 / 130 / ATCC MYA-4618 / FGSC 9003) (Inky cap fungus).